The sequence spans 406 residues: 4-hydroxy-3-methylbut-2-enyl diphosphate reductase (406 aa).

C66 is a binding site for [4Fe-4S] cluster. (2E)-4-hydroxy-3-methylbut-2-enyl diphosphate is bound at residue H96. H96 lines the dimethylallyl diphosphate pocket. H96 is an isopentenyl diphosphate binding site. A [4Fe-4S] cluster-binding site is contributed by C157. H185 is a binding site for (2E)-4-hydroxy-3-methylbut-2-enyl diphosphate. Residue H185 coordinates dimethylallyl diphosphate. Residue H185 coordinates isopentenyl diphosphate. E187 serves as the catalytic Proton donor. T250 provides a ligand contact to (2E)-4-hydroxy-3-methylbut-2-enyl diphosphate. C288 is a binding site for [4Fe-4S] cluster. 4 residues coordinate (2E)-4-hydroxy-3-methylbut-2-enyl diphosphate: S317, S318, N319, and S379. Dimethylallyl diphosphate-binding residues include S317, S318, N319, and S379. Positions 317, 318, 319, and 379 each coordinate isopentenyl diphosphate.

Belongs to the IspH family. The cofactor is [4Fe-4S] cluster.

It carries out the reaction isopentenyl diphosphate + 2 oxidized [2Fe-2S]-[ferredoxin] + H2O = (2E)-4-hydroxy-3-methylbut-2-enyl diphosphate + 2 reduced [2Fe-2S]-[ferredoxin] + 2 H(+). The enzyme catalyses dimethylallyl diphosphate + 2 oxidized [2Fe-2S]-[ferredoxin] + H2O = (2E)-4-hydroxy-3-methylbut-2-enyl diphosphate + 2 reduced [2Fe-2S]-[ferredoxin] + 2 H(+). The protein operates within isoprenoid biosynthesis; dimethylallyl diphosphate biosynthesis; dimethylallyl diphosphate from (2E)-4-hydroxy-3-methylbutenyl diphosphate: step 1/1. Its pathway is isoprenoid biosynthesis; isopentenyl diphosphate biosynthesis via DXP pathway; isopentenyl diphosphate from 1-deoxy-D-xylulose 5-phosphate: step 6/6. Catalyzes the conversion of 1-hydroxy-2-methyl-2-(E)-butenyl 4-diphosphate (HMBPP) into a mixture of isopentenyl diphosphate (IPP) and dimethylallyl diphosphate (DMAPP). Acts in the terminal step of the DOXP/MEP pathway for isoprenoid precursor biosynthesis. The chain is 4-hydroxy-3-methylbut-2-enyl diphosphate reductase from Synechococcus sp. (strain RCC307).